Reading from the N-terminus, the 147-residue chain is MKEKSVLEICFSSKYRCLEQAKKSRPVCATFLFSIKISRTDPLTVLIYQVSVLKSPNCDNCKNDSQKDIFFFLSLYLSSIKIPMLILNIFICSYAIFQIPHFTQEFLTGGWIFFKTRRLPVLDVRECAYCVISDSAPRKEILACSDL.

Residues 69-89 (IFFFLSLYLSSIKIPMLILNI) traverse the membrane as a helical segment.

Its subcellular location is the membrane. This is an uncharacterized protein from Saccharomyces cerevisiae (strain ATCC 204508 / S288c) (Baker's yeast).